The sequence spans 926 residues: MEEDKDSDTLQILNDIINNEPNLEIYVKSKNNNYISSRELPTQDSSTKTSNITTPNNNNNNNNNNNNNNNNNNNNNNNNNNNNNNNNNNNNNNNNNNNNNNNNNNNNTPTSLNSSWKSVVPKRKIDTSSGAILNNNNNVGSPNNQSTSQTNHQQPPPQQLQQQQSLSSTSTPSISPPMLSPSRRNVTSPNLTRSDPTVPITNSRPTSPLTPPLSPQFQLNNLNFDDNNDHSTTTTNNNNNNNNNNSNNNNNNNRPKLMRENSINKRSSLQTLPVSSSSSSSAEDEILIKVWLPMEYTGQLYKVRKFSGGSSTLKVSSMLNSQLSPMYQSPKNKLFLNNEEKPIPSHLTLKDLSLSKYDILYLRREPEYELIIPSSPQCGSLVMDKDIKIDDMLIKIEHWLKDILDHAPHSTSQQQQQQLQQQPILHVDKHEYFTSLEDQQLMSGHITNSSQYTLLKKLSVPTSNSRQTGKMSRGYYLRLYDQKPISNYGIKIKDTLIFKKKILNRGLSIDDAEGGIEITVLYSPLSMLPTTSDLDFEKELKENQQQLNNNNNNNNNNNNNNNNNNNNNNNNITTTTTTTTSSLINQTNEILLPNLIKIDNTSLLQDIKNEKKKRKSKRTPSSVGLPFNIIHKTHVDFEYKWSGTSVEDTFEFKEKLGQGGYGAVFKVLHRETNFPLAIKVLSITPTRIKDIEKEIDLLKKCRCPNVLSYYGSISSKLTELWILMDHCAVGSINDMMKICCDTLDEEQIAVVTLNVLNGLGYLHSKGIVHLDVKAANILLTEDKQIKIADFGVSQQLQTEYGQANVYIGSPLYMAPEVILKAPYNSKADIWSLGITLIELAEGRPPNRGLRSMNQLVEIPNMPPPKLSNPKDWSPCFNNFLATCLVKDPVQRPSVIDLLSHDFIKNAKTTEVLSNLVKQTLSSRQSI.

Over residues 36 to 55 the composition is skewed to polar residues; the sequence is SSRELPTQDSSTKTSNITTP. Disordered stretches follow at residues 36–257 and 546–576; these read SSRE…RPKL and QLNN…TTTT. The span at 56 to 107 shows a compositional bias: low complexity; that stretch reads NNNNNNNNNNNNNNNNNNNNNNNNNNNNNNNNNNNNNNNNNNNNNNNNNNNN. The span at 108–117 shows a compositional bias: polar residues; sequence TPTSLNSSWK. Residues 134–173 show a composition bias toward low complexity; sequence NNNNNVGSPNNQSTSQTNHQQPPPQQLQQQQSLSSTSTPS. Positions 183 to 204 are enriched in polar residues; that stretch reads RRNVTSPNLTRSDPTVPITNSR. Residues 215-253 show a composition bias toward low complexity; the sequence is PQFQLNNLNFDDNNDHSTTTTNNNNNNNNNNSNNNNNNN. The stretch at 534 to 567 forms a coiled coil; that stretch reads LDFEKELKENQQQLNNNNNNNNNNNNNNNNNNNN. Positions 650 to 903 constitute a Protein kinase domain; sequence FEFKEKLGQG…VIDLLSHDFI (254 aa). ATP contacts are provided by residues 656–664 and Lys-679; that span reads LGQGGYGAV. The active-site Proton acceptor is the Asp-771.

The protein belongs to the protein kinase superfamily. STE Ser/Thr protein kinase family. STE20 subfamily. It depends on Mg(2+) as a cofactor.

It carries out the reaction L-seryl-[protein] + ATP = O-phospho-L-seryl-[protein] + ADP + H(+). The catalysed reaction is L-threonyl-[protein] + ATP = O-phospho-L-threonyl-[protein] + ADP + H(+). Functionally, may play a role in responding to changes in chemoattractant levels. This Dictyostelium discoideum (Social amoeba) protein is Serine/threonine-protein kinase pakE.